A 1368-amino-acid chain; its full sequence is Inactive tyrosine-protein kinase PRAG1 (1368 aa).

The segment at 200–236 (CLKGPRPCTSPQPLRESLPSEDDSDQRCSPSGDSEGG) is disordered. At tyrosine 238 the chain carries Phosphotyrosine; by CSK. The tract at residues 297–330 (STANPPHLGPKKPSLNSEAASSSDGLSCGSSRSG) is disordered. Over residues 317–330 (SSSDGLSCGSSRSG) the composition is skewed to low complexity. A phosphotyrosine; by CSK mark is found at tyrosine 343 and tyrosine 391. Disordered regions lie at residues 392–443 (AESA…PNAA), 499–605 (LSSR…GAWS), and 636–792 (HSNS…KKIV). Over residues 414–434 (VSSGQVWTGDTWSQKTPSGWS) the composition is skewed to polar residues. Positions 502–518 (RESHPHNMTENSSKEKP) are enriched in basic and acidic residues. 2 stretches are compositionally biased toward low complexity: residues 522–535 (PKLSKSSPGGSPVS) and 550–563 (SGSSVGSQPSSRVP). Composition is skewed to polar residues over residues 564 to 574 (TNLTSSCQTNG) and 652 to 666 (SGQNGKTNSGMSKSA). A phosphoserine mark is found at serine 667 and serine 716. 2 stretches are compositionally biased toward polar residues: residues 707 to 717 (VSQSSAESLSP) and 725 to 741 (SFTTGSTDSLASDSRTC). Phosphoserine occurs at positions 753 and 797. 2 disordered regions span residues 799-818 (PDGFFWTQGSPKPRTASPKL) and 873-901 (NSKGGCGSPNLQGRAATSTSSSQLSVSSQ). Residues 887–901 (AATSTSSSQLSVSSQ) show a composition bias toward low complexity. The required for homodimerization stretch occupies residues 906-949 (SSQLQLHSLLSSISSKEGTYAKLGGLYTQSLARLVTKCEDLFMG). Positions 940–1291 (VTKCEDLFMG…EAKRVLQCLL (352 aa)) constitute a Protein kinase domain. Residues 1134-1144 (SSPGPSANPSV) show a composition bias toward polar residues. The interval 1134 to 1166 (SSPGPSANPSVPTTTSRCPSAAPAATTACQGGP) is disordered. Over residues 1145–1162 (PTTTSRCPSAAPAATTAC) the composition is skewed to low complexity. The tract at residues 1293–1368 (GPRRELVEQP…LQSLKLLQLL (76 aa)) is required for homodimerization.

Belongs to the protein kinase superfamily. As to quaternary structure, homodimer. Dimerization leads to the catalytic activation of CSK. Interacts (via C-terminus) with RND2. Interacts with CSK (via SH2 domain) in a Tyr-391 phosphorylation-dependent manner; this interaction potentiates kinase activity of CSK. Interacts with NOTCH1 intracellular domain (N1ICD). Forms a complex with N1ICD and MAML1, in a MAML1-dependent manner. Post-translationally, phosphorylated by CSK on Tyr-238, Tyr-343, and Tyr-391; Tyr-391 is a primary site of phosphorylation. Highly-expressed in brain, including cortical and hippocampal pyramidal neurons, as well as in kidney, spleen, colon and small intestine.

It localises to the cytoplasm. The protein localises to the nucleus. The protein resides in the cell junction. Its subcellular location is the focal adhesion. Functionally, catalytically inactive protein kinase that acts as a scaffold protein. Functions as an effector of the small GTPase RND2, which stimulates RhoA activity and inhibits NGF-induced neurite outgrowth. Promotes Src family kinase (SFK) signallig by regulating the subcellular localization of CSK, a negative regulator of these kinases, leading to the regulation of cell morphology and motility by a CSK-dependent mechanism. Acts as a critical coactivator of Notch signaling. The protein is Inactive tyrosine-protein kinase PRAG1 of Rattus norvegicus (Rat).